Here is a 1312-residue protein sequence, read N- to C-terminus: uncharacterized protein (1312 aa).

The first 20 residues, 1-20 (MRNNLIYTMFLSCLHFETFC), serve as a signal peptide directing secretion. Over residues 299–344 (TTTSSSTMLSSTTLLTTETETRESSSTGSTQTTTPSTEPSTTITTP) the composition is skewed to low complexity. Disordered stretches follow at residues 299 to 503 (TTTS…TTTY), 565 to 609 (EITS…PTGG), 645 to 692 (KETR…PTGG), 749 to 775 (SSSSKFSITPTPTPSSGTTTYNWPTGG), 812 to 864 (KTRT…GGTT), 899 to 942 (KTRT…PTGG), 1048 to 1079 (KTRTETTSDAQGCKATSTTQTPTTFNWPTGGT), and 1114 to 1165 (NTTR…TLET). Polar residues predominate over residues 345–357 (MEQSSTVSSVQKT). Positions 365–503 (SSSTTVPTSA…STPATPTTTY (139 aa)) are enriched in low complexity. Residues 565-574 (EITSDAEGCK) show a composition bias toward basic and acidic residues. The span at 576 to 609 (TSSTPTPSSTSVHSTTATPSTTPGTTTYNWPTGG) shows a compositional bias: low complexity. Basic and acidic residues predominate over residues 645-659 (KETRTETTTDADGCK). Residues 660-692 (KTSSTSSSTPSLKHSTTPTPTPGTTTYNWPTGG) show a composition bias toward low complexity. Residues 813–825 (TRTETTTDAEGCK) show a composition bias toward basic and acidic residues. Residues 826–864 (KTSSTSKISTTPTSPTSSKPTPTSTSMTTTYNWPTGGTT) are compositionally biased toward low complexity. Polar residues predominate over residues 899–908 (KTRTETTTDA). A compositionally biased stretch (low complexity) spans 914-942 (TSSTSLKPTSPSSSTASPPTTTYNWPTGG). A compositionally biased stretch (polar residues) spans 1048–1057 (KTRTETTSDA). Over residues 1063 to 1076 (TSTTQTPTTFNWPT) the composition is skewed to low complexity. Residues 1114 to 1123 (NTTRTETTSD) are compositionally biased toward polar residues. Over residues 1130–1154 (TSSGTTSTMSPGTTGGTTVSRTTNS) the composition is skewed to low complexity. Residues 1155 to 1164 (NNPIDSSTLE) show a composition bias toward polar residues. In terms of domain architecture, Sushi spans 1239–1306 (ATCSSLNLNL…WSGTPEKCVA (68 aa)). Intrachain disulfides connect C1241–C1291 and C1273–C1304.

The protein localises to the secreted. This is an uncharacterized protein from Caenorhabditis elegans.